The chain runs to 545 residues: Pentatricopeptide repeat-containing protein At4g18840 (545 aa).

PPR repeat units lie at residues 104-138 (NGFT…PVFP), 139-173 (DKYS…GLVT), 174-204 (DVFV…MPVR), 205-239 (DAVS…NVES), 240-266 (WNFM…MPVR), 267-301 (DVVS…STEK), 303-337 (DGFT…GIEI), 338-368 (EGFL…TSKR), 369-403 (DVST…GFKP), 404-434 (NGIT…MSSV), and 440-474 (TIEH…EASI). A type E motif region spans residues 475–545 (LLESLLGACK…ERVNRSLDVA (71 aa)).

This sequence belongs to the PPR family. PCMP-E subfamily.

The sequence is that of Pentatricopeptide repeat-containing protein At4g18840 (PCMP-E101) from Arabidopsis thaliana (Mouse-ear cress).